Consider the following 146-residue polypeptide: Ribosomal RNA large subunit methyltransferase H (146 aa).

S-adenosyl-L-methionine is bound by residues Leu60, Gly93, and 112-117 (MGKMTL).

The protein belongs to the RNA methyltransferase RlmH family. In terms of assembly, homodimer.

Its subcellular location is the cytoplasm. The enzyme catalyses pseudouridine(1915) in 23S rRNA + S-adenosyl-L-methionine = N(3)-methylpseudouridine(1915) in 23S rRNA + S-adenosyl-L-homocysteine + H(+). Specifically methylates the pseudouridine at position 1915 (m3Psi1915) in 23S rRNA. This Koribacter versatilis (strain Ellin345) protein is Ribosomal RNA large subunit methyltransferase H.